We begin with the raw amino-acid sequence, 247 residues long: ATP synthase subunit a, chloroplastic (247 aa).

Helical transmembrane passes span 36–56, 95–115, 134–154, 199–219, and 220–240; these read GQVL…SIFG, VPFI…GALV, INTT…AGFS, LVVG…LMLL, and GLFT…AYIG.

This sequence belongs to the ATPase A chain family. As to quaternary structure, F-type ATPases have 2 components, CF(1) - the catalytic core - and CF(0) - the membrane proton channel. CF(1) has five subunits: alpha(3), beta(3), gamma(1), delta(1), epsilon(1). CF(0) has four main subunits: a, b, b' and c.

It is found in the plastid. It localises to the chloroplast thylakoid membrane. Functionally, key component of the proton channel; it plays a direct role in the translocation of protons across the membrane. The chain is ATP synthase subunit a, chloroplastic from Mesostigma viride (Green alga).